The following is a 427-amino-acid chain: Tol-Pal system protein TolB (427 aa).

The first 23 residues, Met1–Ala23, serve as a signal peptide directing secretion.

It belongs to the TolB family. The Tol-Pal system is composed of five core proteins: the inner membrane proteins TolA, TolQ and TolR, the periplasmic protein TolB and the outer membrane protein Pal. They form a network linking the inner and outer membranes and the peptidoglycan layer.

The protein localises to the periplasm. Functionally, part of the Tol-Pal system, which plays a role in outer membrane invagination during cell division and is important for maintaining outer membrane integrity. The protein is Tol-Pal system protein TolB of Haemophilus influenzae (strain PittGG).